A 106-amino-acid polypeptide reads, in one-letter code: ATP-dependent Clp protease adapter protein ClpS (106 aa).

It belongs to the ClpS family. As to quaternary structure, binds to the N-terminal domain of the chaperone ClpA.

In terms of biological role, involved in the modulation of the specificity of the ClpAP-mediated ATP-dependent protein degradation. This Escherichia coli O127:H6 (strain E2348/69 / EPEC) protein is ATP-dependent Clp protease adapter protein ClpS.